An 81-amino-acid chain; its full sequence is Putative defensin-like protein 265 (81 aa).

An N-terminal signal peptide occupies residues 1 to 26 (MEKTVSRKVVVLAILLSLSCLCIAKA). 3 disulfide bridges follow: Cys48–Cys66, Cys54–Cys71, and Cys58–Cys73.

The protein belongs to the DEFL family.

It localises to the secreted. This chain is Putative defensin-like protein 265, found in Arabidopsis thaliana (Mouse-ear cress).